A 143-amino-acid chain; its full sequence is Chorion class A protein Ld5 (143 aa).

The first 21 residues, 1–21 (MNSFALLLVCIQACLVQSVFS), serve as a signal peptide directing secretion.

It belongs to the chorion protein family.

In terms of biological role, this protein is one of many from the eggshell of the gypsy moth. The protein is Chorion class A protein Ld5 of Lymantria dispar (Gypsy moth).